The primary structure comprises 234 residues: Phosphoribosylformylglycinamidine synthase subunit PurQ (234 aa).

The Glutamine amidotransferase type-1 domain maps to 5-234 (TVGIVVFPGS…ESLFAHLAGA (230 aa)). Cysteine 89 serves as the catalytic Nucleophile. Residues histidine 206 and glutamate 208 contribute to the active site.

As to quaternary structure, part of the FGAM synthase complex composed of 1 PurL, 1 PurQ and 2 PurS subunits.

The protein localises to the cytoplasm. It carries out the reaction N(2)-formyl-N(1)-(5-phospho-beta-D-ribosyl)glycinamide + L-glutamine + ATP + H2O = 2-formamido-N(1)-(5-O-phospho-beta-D-ribosyl)acetamidine + L-glutamate + ADP + phosphate + H(+). The catalysed reaction is L-glutamine + H2O = L-glutamate + NH4(+). Its pathway is purine metabolism; IMP biosynthesis via de novo pathway; 5-amino-1-(5-phospho-D-ribosyl)imidazole from N(2)-formyl-N(1)-(5-phospho-D-ribosyl)glycinamide: step 1/2. Its function is as follows. Part of the phosphoribosylformylglycinamidine synthase complex involved in the purines biosynthetic pathway. Catalyzes the ATP-dependent conversion of formylglycinamide ribonucleotide (FGAR) and glutamine to yield formylglycinamidine ribonucleotide (FGAM) and glutamate. The FGAM synthase complex is composed of three subunits. PurQ produces an ammonia molecule by converting glutamine to glutamate. PurL transfers the ammonia molecule to FGAR to form FGAM in an ATP-dependent manner. PurS interacts with PurQ and PurL and is thought to assist in the transfer of the ammonia molecule from PurQ to PurL. This chain is Phosphoribosylformylglycinamidine synthase subunit PurQ, found in Chlorobaculum tepidum (strain ATCC 49652 / DSM 12025 / NBRC 103806 / TLS) (Chlorobium tepidum).